The primary structure comprises 66 residues: Potassium channel toxin alpha-KTx (66 aa).

Positions 1-21 (MNTKVVLIMLMITSVILVVEA) are cleaved as a signal peptide. 4 disulfide bridges follow: cysteine 29–cysteine 49, cysteine 35–cysteine 59, cysteine 39–cysteine 61, and cysteine 44–cysteine 64.

It belongs to the short scorpion toxin superfamily. Potassium channel inhibitor family. Expressed by the venom gland.

The protein localises to the secreted. In terms of biological role, blocks voltage-gated potassium channels. The protein is Potassium channel toxin alpha-KTx of Hoffmannihadrurus gertschi (Scorpion).